The following is a 122-amino-acid chain: Protein FAM223B (122 aa).

Belongs to the FAM223 family.

This is Protein FAM223B (FAM223B) from Homo sapiens (Human).